The sequence spans 486 residues: Lipase 1 (486 aa).

A disulfide bond links Cys-58 and Cys-82. Ser-193 (acyl-ester intermediate) is an active-site residue. Asp-303 functions as the Charge relay system in the catalytic mechanism. The N-linked (GlcNAc...) asparagine glycan is linked to Asn-332. His-392 acts as the Charge relay system in catalysis.

This sequence belongs to the type-B carboxylesterase/lipase family.

The enzyme catalyses a triacylglycerol + H2O = a diacylglycerol + a fatty acid + H(+). The protein is Lipase 1 (LIP1) of Yarrowia lipolytica (strain CLIB 122 / E 150) (Yeast).